Reading from the N-terminus, the 79-residue chain is MELEAMSRYTSPVNPAVFPHLTVVLLAIGMFFTAWFFVYEVTSTKYTRDIYKELLISLVASLFMGFGVLFLLLWVGIYI.

Met-1 bears the N-acetylmethionine mark. 2 consecutive transmembrane segments (helical) span residues 17 to 37 (VFPH…AWFF) and 59 to 79 (VASL…GIYI).

Belongs to the OST5 family. As to quaternary structure, component of the oligosaccharyltransferase (OST) complex. OST exists in two different complex forms which contain common core subunits RPN1, RPN2, OST48, OST4, DAD1 and TMEM258, either STT3A or STT3B as catalytic subunits, and form-specific accessory subunits. STT3A complex assembly occurs through the formation of 3 subcomplexes. Subcomplex 1 contains RPN1 and TMEM258, subcomplex 2 contains the STT3A-specific subunits STT3A, DC2/OSTC, and KCP2 as well as the core subunit OST4, and subcomplex 3 contains RPN2, DAD1, and OST48. The STT3A complex can form stable complexes with the Sec61 complex or with both the Sec61 and TRAP complexes.

It localises to the membrane. It is found in the endoplasmic reticulum. Its subcellular location is the cytoplasm. It participates in protein modification; protein glycosylation. Functionally, subunit of the oligosaccharyl transferase (OST) complex that catalyzes the initial transfer of a defined glycan (Glc(3)Man(9)GlcNAc(2) in eukaryotes) from the lipid carrier dolichol-pyrophosphate to an asparagine residue within an Asn-X-Ser/Thr consensus motif in nascent polypeptide chains, the first step in protein N-glycosylation. N-glycosylation occurs cotranslationally and the complex associates with the Sec61 complex at the channel-forming translocon complex that mediates protein translocation across the endoplasmic reticulum (ER). All subunits are required for a maximal enzyme activity. Involved in ER homeostasis in the colonic epithelium. In Bos taurus (Bovine), this protein is Dolichyl-diphosphooligosaccharide--protein glycosyltransferase subunit TMEM258.